Consider the following 107-residue polypeptide: Transcription initiation factor IIA subunit 2-2 (107 aa).

This sequence belongs to the TFIIA subunit 2 family. TFIIA is a heterodimer of the large unprocessed subunit 1 and a small subunit gamma. It was originally believed to be a heterotrimer of an alpha (p30), a beta (p20) and a gamma (p14) subunit.

It localises to the nucleus. Its function is as follows. TFIIA is a component of the transcription machinery of RNA polymerase II and plays an important role in transcriptional activation. TFIIA in a complex with TBP mediates transcriptional activity. The chain is Transcription initiation factor IIA subunit 2-2 (TfIIA-S-2) from Drosophila melanogaster (Fruit fly).